A 502-amino-acid chain; its full sequence is MNLRPEEISQIIKNEIERYEDKLEVVDVGTVIQVGDGVARVHGLENAMAGELLAFPNEVYGMVLNLEEDNVGCVLLGYDDDIVEGDIVRCTGRIVEVPVGEAMIGRVVNALGFPVDGKGPIVTDHRRPVEVKAAGVIERESVNQPIQTGYKAIDSMIPIGRGQRELIIGDRQTGKTALAIDTIINQKGEDVICIYVAIGQKDSTVAQIVGQLEENNAMDYTIIVSAGAAQLAPLQYIAPYSGVTMAEYFMNEQQKDVLIIYDDLSKHAVAYRAMSLILRRPPGREAYPGDVFYLHSRLLERAAKLKAGGSITALPIIETQAGDVSAYIPTNVISITDGQIFLEAELFRSGIRPAVNPGISVSRVGGSAQIKSMKKVAGPLRIEYAQYRELASFAQFGSDLDDETKAQLAKGERIVEILKQDQYDPMNVEDQVLILYAATNGFLLDIEVKDIREFEKGLIKFAQKKYPEIMTKVKGKDGLSDEVVAAFAECIEAYKKVFSKSV.

Residue 169–176 (GDRQTGKT) participates in ATP binding.

Belongs to the ATPase alpha/beta chains family. In terms of assembly, F-type ATPases have 2 components, CF(1) - the catalytic core - and CF(0) - the membrane proton channel. CF(1) has five subunits: alpha(3), beta(3), gamma(1), delta(1), epsilon(1). CF(0) has three main subunits: a, b and c.

The protein resides in the cell membrane. The catalysed reaction is 4 Na(+)(in) + ATP + H2O = 4 Na(+)(out) + ADP + phosphate + H(+). Inhibited by nitrate. Its function is as follows. Produces ATP from ADP in the presence of a sodium ion gradient across the membrane. The alpha chain is a regulatory subunit. The polypeptide is ATP synthase subunit alpha, sodium ion specific (Acetobacterium woodii (strain ATCC 29683 / DSM 1030 / JCM 2381 / KCTC 1655 / WB1)).